Consider the following 128-residue polypeptide: Sulfurtransferase TusD (128 aa).

Cys78 (cysteine persulfide intermediate) is an active-site residue.

This sequence belongs to the DsrE/TusD family. Heterohexamer, formed by a dimer of trimers. The hexameric TusBCD complex contains 2 copies each of TusB, TusC and TusD. The TusBCD complex interacts with TusE.

The protein resides in the cytoplasm. Its function is as follows. Part of a sulfur-relay system required for 2-thiolation of 5-methylaminomethyl-2-thiouridine (mnm(5)s(2)U) at tRNA wobble positions. Accepts sulfur from TusA and transfers it in turn to TusE. The chain is Sulfurtransferase TusD from Klebsiella pneumoniae subsp. pneumoniae (strain ATCC 700721 / MGH 78578).